Consider the following 402-residue polypeptide: Arginine deiminase (402 aa).

Catalysis depends on Cys-392, which acts as the Amidino-cysteine intermediate.

The protein belongs to the arginine deiminase family.

It is found in the cytoplasm. The enzyme catalyses L-arginine + H2O = L-citrulline + NH4(+). It participates in amino-acid degradation; L-arginine degradation via ADI pathway; carbamoyl phosphate from L-arginine: step 1/2. This Mycolicibacterium gilvum (strain PYR-GCK) (Mycobacterium gilvum (strain PYR-GCK)) protein is Arginine deiminase.